The primary structure comprises 177 residues: Nucleoside triphosphate/diphosphate phosphatase (177 aa).

Arg23 serves as the catalytic Proton donor. Mg(2+) contacts are provided by Asn87, Asp103, Asp105, Asp107, Asp120, and Glu123.

Belongs to the Ntdp family. Mg(2+) is required as a cofactor.

It catalyses the reaction a ribonucleoside 5'-triphosphate + H2O = a ribonucleoside 5'-diphosphate + phosphate + H(+). The catalysed reaction is a ribonucleoside 5'-diphosphate + H2O = a ribonucleoside 5'-phosphate + phosphate + H(+). Its function is as follows. Has nucleoside phosphatase activity towards nucleoside triphosphates and nucleoside diphosphates. The polypeptide is Nucleoside triphosphate/diphosphate phosphatase (Enterococcus faecalis (strain ATCC 700802 / V583)).